The primary structure comprises 593 residues: Mono(ADP-ribosyl)transferase SpvB (593 aa).

The tract at residues 361 to 384 (PVNNMMPPPPPPPPPMMGGNSSRP) is disordered. The span at 366 to 376 (MPPPPPPPPPM) shows a compositional bias: pro residues. Residues 375–578 (PMMGGNSSRP…LRLSDDATAD (204 aa)) form the TR mART core domain. Active-site residues include Arg-473, Ser-503, and Glu-540.

This sequence belongs to the SpvB family.

It is found in the secreted. It carries out the reaction L-arginyl-[protein] + NAD(+) = N(omega)-(ADP-D-ribosyl)-L-arginyl-[protein] + nicotinamide + H(+). Functionally, mono-ADP-ribosylates muscle and non-muscle actin. ADP-ribosylates Chinese hamster ovary and HeLa cell actin as well as rabbit muscle, porcine heart actin and non-muscle beta- and gamma-actin. ADP-ribosylation of actin prevents the polymerization of G actin to F actin, causing actin filament depolymerization, destruction of the cytoskeleton and cytotoxicity; this requires only the C-terminal 120 residues. Does not possess NAD(+)-glycohydrolase activity, unlike most mART enzymes. In Salmonella dublin, this protein is Mono(ADP-ribosyl)transferase SpvB (spvB).